The primary structure comprises 248 residues: Gas vesicle protein J (248 aa).

Residues 121 to 140 (DVKDDLYQTSAKIPSPVDTP) form a 1; truncated repeat. The tract at residues 121-245 (DVKDDLYQTS…EEIPSSVDPA (125 aa)) is 6 X 21 AA approximate tandem repeats. 5 tandem repeats follow at residues 141–161 (IEVLDFQAQSSGGTPPYVNTS), 162–182 (MEILDFQAQTSAESSSPVGST), 183–203 (VEILDFQAQTSEESSSPVVST), 204–224 (VEILDFQAQTSEESSSPVGST), and 225–245 (VEILDFQAQTSEEIPSSVDPA).

The protein belongs to the gas vesicle GvpA family. Interacts with GvpA.

It localises to the gas vesicle. In terms of biological role, a minor component of the gas vesicle, might be involved in nucleating gas vesicle formation. Gas vesicles (GV) are hollow, gas filled proteinaceous nanostructures. During planktonic growth they allow positioning of the organism at a favorable depth for light or nutrient acquisition. This chain is Gas vesicle protein J, found in Dolichospermum flosaquae (Anabaena flos-aquae).